The primary structure comprises 631 residues: Dolichyl-diphosphooligosaccharide--protein glycosyltransferase subunit 2 (631 aa).

A signal peptide spans 1–22 (MAPPGSSAVFLLALTITASTQA). The Lumenal portion of the chain corresponds to 23-540 (LTPTHYLTKH…REPEKRPPTV (518 aa)). A glycan (N-linked (GlcNAc...) asparagine) is linked at N106. Residue K154 forms a Glycyl lysine isopeptide (Lys-Gly) (interchain with G-Cter in ubiquitin) linkage. A helical membrane pass occupies residues 541 to 561 (VSNTFTALILSPLLLLFALWI). Topologically, residues 562–571 (RIGANVSNFT) are cytoplasmic. The chain crosses the membrane as a helical span at residues 572–592 (FAPSTVIFHLGHAAMLGLMYV). Residues 593-596 (YWTQ) are Lumenal-facing. The helical transmembrane segment at 597–617 (LNMFQTLKYLAVLGTVTFLAG) threads the bilayer. Residues 618–631 (NRMLAQQAVKRTAH) are Cytoplasmic-facing.

The protein belongs to the SWP1 family. In terms of assembly, component of the oligosaccharyltransferase (OST) complex. OST exists in two different complex forms which contain common core subunits RPN1, RPN2, OST48, OST4, DAD1 and TMEM258, either STT3A or STT3B as catalytic subunits, and form-specific accessory subunits. STT3A complex assembly occurs through the formation of 3 subcomplexes. Subcomplex 1 contains RPN1 and TMEM258, subcomplex 2 contains the STT3A-specific subunits STT3A, DC2/OSTC, and KCP2 as well as the core subunit OST4, and subcomplex 3 contains RPN2, DAD1, and OST48. The STT3A complex can form stable complexes with the Sec61 complex or with both the Sec61 and TRAP complexes. Interacts with DDI2. Interacts with TMEM35A/NACHO.

It localises to the endoplasmic reticulum. The protein resides in the endoplasmic reticulum membrane. Its pathway is protein modification; protein glycosylation. Its function is as follows. Subunit of the oligosaccharyl transferase (OST) complex that catalyzes the initial transfer of a defined glycan (Glc(3)Man(9)GlcNAc(2) in eukaryotes) from the lipid carrier dolichol-pyrophosphate to an asparagine residue within an Asn-X-Ser/Thr consensus motif in nascent polypeptide chains, the first step in protein N-glycosylation. N-glycosylation occurs cotranslationally and the complex associates with the Sec61 complex at the channel-forming translocon complex that mediates protein translocation across the endoplasmic reticulum (ER). All subunits are required for a maximal enzyme activity. The polypeptide is Dolichyl-diphosphooligosaccharide--protein glycosyltransferase subunit 2 (Rattus norvegicus (Rat)).